The primary structure comprises 333 residues: MAFRLKLVPEKTNFDFFRWQWATFGAAIVMMIASVILPLVIGLNFGIDFKGGTTIRTESTTAIDVGVYRAALEPLELGDVIISEVRDPSFREDQHVAMIRIQMQEDGQGAEGQGAQGQELVNKVETALTAVDPALKITSFESVGPKVSGELVWTAVWSLLAATVVIMFYIWVRFEWQFALGAVVALVHDVLLTVGLFAVLQLKFDLTTVAALLTITGYSINDTVVVFDRLRENLIKYKTMPLRDVMNLSVNETLSRTVMTGMTTLLALVPMLIWGGDVIRGFVFAMVWGVFTGTYSSVYVAKNIVLFIGLDRNKEKKDPSDKFFSNGAQDGAP.

6 consecutive transmembrane segments (helical) span residues 27-47, 152-172, 180-200, 207-227, 253-275, and 285-307; these read AIVMMIASVILPLVIGLNFGI, VWTAVWSLLAATVVIMFYIWV, LGAVVALVHDVLLTVGLFAVL, TTVAALLTITGYSINDTVVVF, TLSRTVMTGMTTLLALVPMLIWG, and AMVWGVFTGTYSSVYVAKNIVLF.

The protein belongs to the SecD/SecF family. SecF subfamily. Forms a complex with SecD. Part of the essential Sec protein translocation apparatus which comprises SecA, SecYEG and auxiliary proteins SecDF-YajC and YidC.

The protein localises to the cell inner membrane. In terms of biological role, part of the Sec protein translocase complex. Interacts with the SecYEG preprotein conducting channel. SecDF uses the proton motive force (PMF) to complete protein translocation after the ATP-dependent function of SecA. The sequence is that of Protein translocase subunit SecF from Rhodobacter capsulatus (strain ATCC BAA-309 / NBRC 16581 / SB1003).